Consider the following 272-residue polypeptide: Glutamate 5-kinase (272 aa).

Position 15 (Lys-15) interacts with ATP. Ser-55, Asp-142, and Asn-158 together coordinate substrate. Residues 178–179 and 220–226 contribute to the ATP site; these read SD and TGGMLSK.

The protein belongs to the glutamate 5-kinase family.

It is found in the cytoplasm. It carries out the reaction L-glutamate + ATP = L-glutamyl 5-phosphate + ADP. It participates in amino-acid biosynthesis; L-proline biosynthesis; L-glutamate 5-semialdehyde from L-glutamate: step 1/2. In terms of biological role, catalyzes the transfer of a phosphate group to glutamate to form L-glutamate 5-phosphate. The sequence is that of Glutamate 5-kinase from Streptococcus equi subsp. zooepidemicus (strain H70).